Reading from the N-terminus, the 443-residue chain is MEKTYHFTGIKGSGMSALALMLHQMGKNVQGSDSTDYFFTQRGLEQAGVPLLPFDEKNIKPEFELIVGNAFRDDNNVEIAFAHKNGFPFKRYHEFLGHFMEDFTSIGVAGAHGKTSTTGMLAHVMSNIVDTSYLIGDGTGRGNAGSEYFVFESDEYERHFMPYHPEYTIMTNIDFDHPDYFEGIEDVTSAFQDYANNIKKGIFAYGEDVNLRKLSAKAPIYYYGFEANDDYRAENLIRSTRGSSFDAYFRGEKIGHFVVPAYGKHNVLNALSVVAVCHNLGLDMTDVADHLLTFRGVKRRFTEKKVGETVIIDDFAHHPTEIEATLDAARQKYPDREIVAVFQPHTFTRTIAFADEFAEVLDHADTVYLAQIYGSAREVDHHEITAQDLADKVRKPAKVIELDNVSPLLDHDRGVYVFMGAGNIQKYEIAFEKLLSQTSTNLQ.

110-116 (GAHGKTS) serves as a coordination point for ATP.

The protein belongs to the MurCDEF family.

It is found in the cytoplasm. The enzyme catalyses UDP-N-acetyl-alpha-D-muramate + L-alanine + ATP = UDP-N-acetyl-alpha-D-muramoyl-L-alanine + ADP + phosphate + H(+). It functions in the pathway cell wall biogenesis; peptidoglycan biosynthesis. Functionally, cell wall formation. This is UDP-N-acetylmuramate--L-alanine ligase from Lactococcus lactis subsp. cremoris (strain MG1363).